A 171-amino-acid chain; its full sequence is N5-carboxyaminoimidazole ribonucleotide mutase (171 aa).

Residues Ser-10, Asp-13, and Arg-40 each coordinate substrate.

This sequence belongs to the AIR carboxylase family. Class I subfamily.

The enzyme catalyses 5-carboxyamino-1-(5-phospho-D-ribosyl)imidazole + H(+) = 5-amino-1-(5-phospho-D-ribosyl)imidazole-4-carboxylate. It functions in the pathway purine metabolism; IMP biosynthesis via de novo pathway; 5-amino-1-(5-phospho-D-ribosyl)imidazole-4-carboxylate from 5-amino-1-(5-phospho-D-ribosyl)imidazole (N5-CAIR route): step 2/2. Catalyzes the conversion of N5-carboxyaminoimidazole ribonucleotide (N5-CAIR) to 4-carboxy-5-aminoimidazole ribonucleotide (CAIR). The sequence is that of N5-carboxyaminoimidazole ribonucleotide mutase from Thermotoga maritima (strain ATCC 43589 / DSM 3109 / JCM 10099 / NBRC 100826 / MSB8).